The chain runs to 194 residues: MSVKTKKFVNKKYTTAKFKVTPTGKCRNKNNESIKKLIFNNGTKINTGLNLLLTQPNQVNIPPPPKILLDRIREERKRMVSSANSDITVIDIELCWEIDKFLAHHFQNTDSSKNDNYTKSNIKKPINAFIAFRAYYSQLGAGIKQNILSSILSEAWNSPETDQNIWDIFAQQFNFASARCGFVNYIMAQASSAP.

The alpha box DNA-binding region spans 121-177 (NIKKPINAFIAFRAYYSQLGAGIKQNILSSILSEAWNSPETDQNIWDIFAQQFNFAS).

The protein belongs to the MATALPHA1 family.

The protein localises to the nucleus. Mating type proteins are sequence specific DNA-binding proteins that act as master switches in yeast differentiation by controlling gene expression in a cell type-specific fashion. Transcriptional activator that induces the transcription of alpha-specific genes. The chain is Mating-type protein ALPHA1 (MATALPHA1) from Nakaseomyces delphensis (Yeast).